A 376-amino-acid chain; its full sequence is Succinyl-diaminopimelate desuccinylase (376 aa).

Histidine 74 contributes to the Zn(2+) binding site. Aspartate 76 is a catalytic residue. Zn(2+) is bound at residue aspartate 105. The Proton acceptor role is filled by glutamate 135. Zn(2+)-binding residues include glutamate 136, glutamate 164, and histidine 349.

Belongs to the peptidase M20A family. DapE subfamily. As to quaternary structure, homodimer. It depends on Zn(2+) as a cofactor. Co(2+) is required as a cofactor.

The enzyme catalyses N-succinyl-(2S,6S)-2,6-diaminopimelate + H2O = (2S,6S)-2,6-diaminopimelate + succinate. It participates in amino-acid biosynthesis; L-lysine biosynthesis via DAP pathway; LL-2,6-diaminopimelate from (S)-tetrahydrodipicolinate (succinylase route): step 3/3. In terms of biological role, catalyzes the hydrolysis of N-succinyl-L,L-diaminopimelic acid (SDAP), forming succinate and LL-2,6-diaminopimelate (DAP), an intermediate involved in the bacterial biosynthesis of lysine and meso-diaminopimelic acid, an essential component of bacterial cell walls. The chain is Succinyl-diaminopimelate desuccinylase from Zymomonas mobilis subsp. mobilis (strain ATCC 31821 / ZM4 / CP4).